We begin with the raw amino-acid sequence, 251 residues long: uncharacterized protein (251 aa).

An N-terminal signal peptide occupies residues Met1–Cys15. Asn225 and Asn242 each carry an N-linked (GlcNAc...) asparagine glycan.

This is an uncharacterized protein from Encephalitozoon cuniculi (strain GB-M1) (Microsporidian parasite).